Consider the following 198-residue polypeptide: MSFSPLIRQLIESLRILPGVGQKSAQRMALMLLERDRSGGLKLAQALTAAMEGVGHCRQCRTLSEEELCPQCADPRRDDSLLCVVEGPLDVFAVEQTGYRGRYFVLKGHLSPLDGLGPEAIGIPELEARIRDGAFSEVILATNPTVEGEATAHYIAQLLAGRGLTLSRIAHGVPLGGELELVDGGTLAHALAGRRPIS.

The C4-type zinc finger occupies 57-72 (CRQCRTLSEEELCPQC). Positions 80-174 (SLLCVVEGPL…TLSRIAHGVP (95 aa)) constitute a Toprim domain.

The protein belongs to the RecR family.

Functionally, may play a role in DNA repair. It seems to be involved in an RecBC-independent recombinational process of DNA repair. It may act with RecF and RecO. The protein is Recombination protein RecR of Pseudomonas aeruginosa (strain LESB58).